A 163-amino-acid chain; its full sequence is Photosystem II extrinsic protein V (163 aa).

Residues methionine 1–alanine 26 form the signal peptide. Residues cysteine 63, cysteine 66, histidine 67, and methionine 130 each contribute to the heme c site.

The protein belongs to the cytochrome c family. PsbV subfamily. PSII is composed of 1 copy each of membrane proteins PsbA, PsbB, PsbC, PsbD, PsbE, PsbF, PsbH, PsbI, PsbJ, PsbK, PsbL, PsbM, PsbT, PsbY, PsbZ, Psb30/Ycf12, at least 3 peripheral proteins of the oxygen-evolving complex and a large number of cofactors. It forms dimeric complexes. Requires heme c as cofactor.

The protein resides in the plastid. It is found in the chloroplast thylakoid membrane. One of the extrinsic, lumenal subunits of photosystem II (PSII). PSII is a light-driven water plastoquinone oxidoreductase, using light energy to abstract electrons from H(2)O, generating a proton gradient subsequently used for ATP formation. The extrinsic proteins stabilize the structure of photosystem II oxygen-evolving complex (OEC), the ion environment of oxygen evolution and protect the OEC against heat-induced inactivation. This is Photosystem II extrinsic protein V from Phaeodactylum tricornutum (strain CCAP 1055/1).